A 111-amino-acid chain; its full sequence is Ribosome-binding factor A (111 aa).

Belongs to the RbfA family. As to quaternary structure, monomer. Binds 30S ribosomal subunits, but not 50S ribosomal subunits or 70S ribosomes.

The protein resides in the cytoplasm. Functionally, one of several proteins that assist in the late maturation steps of the functional core of the 30S ribosomal subunit. Associates with free 30S ribosomal subunits (but not with 30S subunits that are part of 70S ribosomes or polysomes). Required for efficient processing of 16S rRNA. May interact with the 5'-terminal helix region of 16S rRNA. The polypeptide is Ribosome-binding factor A (Helicobacter pylori (strain Shi470)).